We begin with the raw amino-acid sequence, 873 residues long: Zinc finger X-linked protein ZXDB (873 aa).

Disordered stretches follow at residues 1 to 23 (MEIP…GCPA), 48 to 120 (RGAQ…GGSR), 138 to 184 (VETV…LSAV), 240 to 259 (EPGV…GALI), and 301 to 330 (AEPA…GPAG). Composition is skewed to gly residues over residues 14–23 (QGAGGGGCPA) and 85–120 (SGGG…GGSR). Arg-89 is subject to Omega-N-methylarginine. Positions 150-165 (VRREEAGAGPRPERRQ) are enriched in basic and acidic residues. Pro residues predominate over residues 240-255 (EPGVAPFPQPQPPPQP). The segment covering 316 to 327 (APAAAAAQSPRG) has biased composition (low complexity). 10 consecutive C2H2-type zinc fingers follow at residues 340-364 (YLCP…LLTH), 373-397 (FKCP…LQSH), 403-427 (FGCP…MKGH), 433-455 (FKCE…QRSH), 462-486 (YQCA…NRAH), 493-517 (FACS…LRSH), 523-547 (FLCD…KRKH), 553-577 (FTCP…SITH), 583-607 (FVCP…SKKH), and 616-641 (SRCP…TKRH). Residues 340–646 (YLCPEAQCGQ…MTKRHNLSQD (307 aa)) are required for interaction with ZXDC. Positions 645–776 (QDLLAQLEAA…DMDDVSAGNV (132 aa)) are required for transcriptional activation.

Belongs to the ZXD family. Self-associates. Interacts with ZXDC and CIITA.

It is found in the nucleus. In terms of biological role, cooperates with CIITA to promote transcription of MHC class I and MHC class II genes. This Mus musculus (Mouse) protein is Zinc finger X-linked protein ZXDB (Zxdb).